A 547-amino-acid chain; its full sequence is Sensor histidine kinase CitA (547 aa).

Topologically, residues 1–23 (MSIYPMYTRKITHWFARRSFQNR) are cytoplasmic. A helical membrane pass occupies residues 24–44 (IFLLILFTSTIVMLAMSWYLT). The Periplasmic segment spans residues 45–180 (DITEERLHYQ…TIEQLENWLS (136 aa)). Residues Arg-109, His-112, Arg-150, and Lys-152 each contribute to the citrate site. A helical membrane pass occupies residues 181–201 (LQISSLLIPMAIMLLLLLFCA). The Cytoplasmic segment spans residues 202–547 (RRFSLHIKKQ…IPLTRDEHHG (346 aa)). In terms of domain architecture, PAS spans 225 to 264 (IQQSVLFESVFEGLIAIDSDYKITAINQTARRLLNLSQPE). Positions 347–542 (AVQHEHRNLI…IFTLYIPLTR (196 aa)) constitute a Histidine kinase domain. His-350 is modified (phosphohistidine; by autocatalysis).

As to quaternary structure, homodimer. In vitro CitB and the CitA kinase domain form a complex, formation of which is enhanced by ATP. In terms of processing, autophosphorylated.

The protein localises to the cell inner membrane. It carries out the reaction ATP + protein L-histidine = ADP + protein N-phospho-L-histidine.. In terms of biological role, member of the two-component regulatory system CitA/CitB. Probably activates CitB by phosphorylation. The periplasmic domain binds H-citrate(2-), which is essential for induction of the citrate-fermentation genes. The chain is Sensor histidine kinase CitA (citA) from Klebsiella pneumoniae.